The sequence spans 598 residues: DNA mismatch repair protein MutL (598 aa).

The protein belongs to the DNA mismatch repair MutL/HexB family.

Its function is as follows. This protein is involved in the repair of mismatches in DNA. It is required for dam-dependent methyl-directed DNA mismatch repair. May act as a 'molecular matchmaker', a protein that promotes the formation of a stable complex between two or more DNA-binding proteins in an ATP-dependent manner without itself being part of a final effector complex. The chain is DNA mismatch repair protein MutL from Thiobacillus denitrificans (strain ATCC 25259 / T1).